Consider the following 449-residue polypeptide: MLEEHYYSRKTCGSGGGLSVQRTGYPQTDPPVFKAVNSFERAPLIVGDHVHSLPYWSRKITLECTPYPFTLRWEGGVHKDGIPDKVPHPSCDPGSELVSYTHSREVDCERFIGPVPSSFTDPKVTSAQWKFLEDMADMKALADLNKSLVNLPMLYKERRETLKMVGNRLGGLVRVAHAAQDRDLKRYFKARRKDRRKVAEEVANGHLELIFGWLPLIGELEGAIEYAELPDLDFIRCHGLHTLVLQSTPWDNSVDVRSYPNWERAAGTRITGSVRTRGVVESRASVRTALRFNLETSLAGDARRLGFEPISTTYDMIPLSFVVGWFSNFDKYVRTLAPLIGVTFETGSRNRRTTCELVGSTRFYPRTVSPPSGWFARWKDFPDGSLSEVSGLRRTDIRSVLSTLPDPDVRFHADVGLFEISAGISLLAQRYLKPLQRLLKRKSFFYGRT.

This sequence belongs to the Leviviricetes maturation protein family. As to quaternary structure, interacts with the host pilus.

The protein localises to the virion. The maturation protein is required for the typical attachment of the phage to the side of the bacterial F-pili. Binds to sequences located toward each end of the genome, hence circularizing it. The RNA genome-maturation protein A complex is released from the capsid upon host receptor binding. Maturation protein A enters the cell along with the viral RNA. The polypeptide is Maturation protein A (Pseudomonas aeruginosa (Bacteriophage PP7)).